Here is a 90-residue protein sequence, read N- to C-terminus: Probable Fe(2+)-trafficking protein (90 aa).

Belongs to the Fe(2+)-trafficking protein family.

In terms of biological role, could be a mediator in iron transactions between iron acquisition and iron-requiring processes, such as synthesis and/or repair of Fe-S clusters in biosynthetic enzymes. In Xylella fastidiosa (strain M23), this protein is Probable Fe(2+)-trafficking protein.